A 129-amino-acid chain; its full sequence is Small ribosomal subunit protein uS11 (129 aa).

This sequence belongs to the universal ribosomal protein uS11 family. Part of the 30S ribosomal subunit. Interacts with proteins S7 and S18. Binds to IF-3.

In terms of biological role, located on the platform of the 30S subunit, it bridges several disparate RNA helices of the 16S rRNA. Forms part of the Shine-Dalgarno cleft in the 70S ribosome. The chain is Small ribosomal subunit protein uS11 from Allorhizobium ampelinum (strain ATCC BAA-846 / DSM 112012 / S4) (Agrobacterium vitis (strain S4)).